A 737-amino-acid chain; its full sequence is Dipeptidyl peptidase 3 (737 aa).

N-acetylalanine is present on A2. A Zn(2+)-binding site is contributed by H450. The active site involves E451. Zn(2+) contacts are provided by H455 and E508.

It belongs to the peptidase M49 family. The cofactor is Zn(2+). Detected in placenta (at protein level). Detected in erythrocytes (at protein level).

It is found in the cytoplasm. The protein localises to the cytosol. The enzyme catalyses Release of an N-terminal dipeptide from a peptide comprising four or more residues, with broad specificity. Also acts on dipeptidyl 2-naphthylamides.. With respect to regulation, activated by Co(2+). Inhibited by EDTA and o-phenanthroline (in vitro). Functionally, cleaves and degrades bioactive peptides, including angiotensin, Leu-enkephalin and Met-enkephalin. Also cleaves Arg-Arg-beta-naphthylamide (in vitro). This chain is Dipeptidyl peptidase 3 (DPP3), found in Homo sapiens (Human).